The following is a 384-amino-acid chain: Stress response protein bis1 (384 aa).

Disordered stretches follow at residues 1–22 (MSLA…NKEQ) and 344–384 (SPLH…PKRV).

Belongs to the ESS2 family. In terms of assembly, heterodimer with ish1.

The protein localises to the nucleus. The protein resides in the cytoplasm. It is found in the cytoskeleton. It localises to the spindle. Has a role in maintaining cell viability during stationary phase induced by stress response. May be involved in pre-mRNA splicing. This is Stress response protein bis1 (bis1) from Schizosaccharomyces pombe (strain 972 / ATCC 24843) (Fission yeast).